Consider the following 342-residue polypeptide: Zinc transporter ZIP11 (342 aa).

Helical transmembrane passes span 12 to 32 (LLGT…VFVF), 44 to 64 (LGFA…APAV), 72 to 92 (GFGA…AAFV), 194 to 214 (IALL…AVGV), 263 to 285 (FWYG…FAVV), 290 to 307 (ILPY…YVVM), and 322 to 342 (LASW…VGLG).

This sequence belongs to the ZIP transporter (TC 2.A.5) family.

Its subcellular location is the cell membrane. It is found in the nucleus. The protein localises to the cytoplasm. The protein resides in the golgi apparatus. The enzyme catalyses Zn(2+)(in) = Zn(2+)(out). It catalyses the reaction Cu(2+)(in) = Cu(2+)(out). Zinc importer that regulates cytosolic zinc concentrations either via zinc influx from the extracellular compartment or efflux from intracellular organelles such as Golgi apparatus. May transport copper ions as well. The transport mechanism remains to be elucidated. The protein is Zinc transporter ZIP11 (SLC39A11) of Homo sapiens (Human).